The primary structure comprises 185 residues: Ribosome-recycling factor (185 aa).

Belongs to the RRF family.

It localises to the cytoplasm. Its function is as follows. Responsible for the release of ribosomes from messenger RNA at the termination of protein biosynthesis. May increase the efficiency of translation by recycling ribosomes from one round of translation to another. This chain is Ribosome-recycling factor, found in Citrifermentans bemidjiense (strain ATCC BAA-1014 / DSM 16622 / JCM 12645 / Bem) (Geobacter bemidjiensis).